The following is a 1426-amino-acid chain: Ferlin 2 (1426 aa).

C2 domains lie at 1 to 111, 161 to 279, 512 to 638, 1031 to 1154, and 1189 to 1318; these read MGKT…QIRK, RKAV…PRWF, EKSK…ESPT, SEDR…QKSM, and KAGE…TLNS. Positions 1357–1377 are disordered; that stretch reads SKPVGLGREPPNRDPRLTTPQ. Residues 1366–1377 show a composition bias toward basic and acidic residues; the sequence is PPNRDPRLTTPQ. Residues 1404-1424 form a helical membrane-spanning segment; that stretch reads VAAVVFLSIWIFVVAFLYPSL.

The protein belongs to the ferlin family.

Its subcellular location is the membrane. The protein localises to the inner membrane complex. It localises to the cytoplasmic vesicle. It is found in the secretory vesicle. The protein resides in the rhoptry. Functionally, regulates rhoptry secretion. Required for completing the lytic cycle. Required for host cell invasion. Not required for microneme secretion and conoid extrusion. This is Ferlin 2 from Toxoplasma gondii.